A 481-amino-acid chain; its full sequence is NADH-quinone oxidoreductase subunit N (481 aa).

The next 14 helical transmembrane spans lie at 11-31, 37-57, 74-94, 103-123, 128-148, 162-182, 205-225, 238-258, 272-292, 300-320, 328-348, 371-391, 405-425, and 457-477; these read AYPEIFLLLMVCVVMLADLFA, YLAFYLSLLTLAGCALVTCGI, AMSDILKLLIYVTVAAVLIYS, LLKGEFFSLALFATLGMMVMV, LITLYLGLELLSLSLYAMVAL, FFVLGALASGFLLYGMSMLYG, IFIIGLVFVVAGIGFKLSAVP, PTAVTLFIGSAPKFAAFGFVM, WQGMLVLLAVASMAVGNIAAI, MLAYSTISHMGFVLLGFIAAG, MFYVIAYVLMTLGAFGIIMLV, LAFMMLLVMFSMAGIPPMIGF, GYIWLVVVAVMLSLIGAFYYL, and LAIILLGMFPQMLMGLSLSAI.

Belongs to the complex I subunit 2 family. As to quaternary structure, NDH-1 is composed of 14 different subunits. Subunits NuoA, H, J, K, L, M, N constitute the membrane sector of the complex.

The protein resides in the cell inner membrane. The catalysed reaction is a quinone + NADH + 5 H(+)(in) = a quinol + NAD(+) + 4 H(+)(out). Functionally, NDH-1 shuttles electrons from NADH, via FMN and iron-sulfur (Fe-S) centers, to quinones in the respiratory chain. The immediate electron acceptor for the enzyme in this species is believed to be ubiquinone. Couples the redox reaction to proton translocation (for every two electrons transferred, four hydrogen ions are translocated across the cytoplasmic membrane), and thus conserves the redox energy in a proton gradient. In Nitrosomonas europaea (strain ATCC 19718 / CIP 103999 / KCTC 2705 / NBRC 14298), this protein is NADH-quinone oxidoreductase subunit N.